A 3411-amino-acid chain; its full sequence is Genome polyprotein (3411 aa).

The Cytoplasmic portion of the chain corresponds to Met-1 to Asp-104. The tract at residues Pro-38–Leu-72 is hydrophobic; homodimerization of capsid protein C. A propeptide spans Ser-102–Gly-121 (ER anchor for the capsid protein C, removed in mature form by serine protease NS3). A helical transmembrane segment spans residues Val-105–Val-125. Residues Arg-126 to Arg-244 are Extracellular-facing. 2 N-linked (GlcNAc...) asparagine; by host glycosylation sites follow: Asn-134 and Asn-150. Residues Trp-245–Ser-265 traverse the membrane as a helical segment. Over Asn-266–Arg-270 the chain is Cytoplasmic. The helical transmembrane segment at Val-271–Ser-285 threads the bilayer. The Extracellular portion of the chain corresponds to Ala-286–Leu-730. 8 disulfides stabilise this stretch: Cys-288–Cys-315, Cys-345–Cys-401, Cys-345–Cys-406, Cys-359–Cys-390, Cys-377–Cys-401, Cys-377–Cys-406, Cys-467–Cys-568, and Cys-585–Cys-615. A fusion peptide region spans residues Asp-383–Gly-396. Residues Phe-731–Ile-751 form a helical membrane-spanning segment. The Extracellular segment spans residues Asn-752–Thr-757. A helical transmembrane segment spans residues Met-758–Ala-778. Residues Asp-779–Glu-1132 are Extracellular-facing. 6 disulfides stabilise this stretch: Cys-782–Cys-793, Cys-833–Cys-921, Cys-957–Cys-1002, Cys-1058–Cys-1107, Cys-1069–Cys-1091, and Cys-1090–Cys-1094. N-linked (GlcNAc...) asparagine; by host glycosylation is found at Asn-908 and Asn-986. The helical transmembrane segment at Ile-1133–Lys-1153 threads the bilayer. Residues Arg-1154–Ala-1201 lie on the Cytoplasmic side of the membrane. A helical transmembrane segment spans residues Met-1202–Leu-1222. Residues Arg-1223–Pro-1287 lie on the Lumenal side of the membrane. A helical membrane pass occupies residues Val-1288–Val-1308. The Cytoplasmic segment spans residues Leu-1309 to Ser-1355. Residues Ile-1356 to Phe-1376 traverse the membrane as a helical segment. At Gln-1377 to Glu-1378 the chain is on the lumenal side. A helical transmembrane segment spans residues Met-1379–Ala-1399. The Cytoplasmic portion of the chain corresponds to Gly-1400–Leu-1456. The interacts with and activates NS3 protease stretch occupies residues Leu-1407–Val-1446. An intramembrane region (helical) is located at residues Ala-1457–Phe-1477. The Cytoplasmic segment spans residues His-1478–Ala-2157. Positions Ser-1485–Leu-1665 constitute a Peptidase S7 domain. Residues His-1537, Asp-1561, and Ser-1622 each act as charge relay system; for serine protease NS3 activity in the active site. In terms of domain architecture, Helicase ATP-binding spans Pro-1669 to Gln-1825. Residues Lys-1673 to Met-1676 are important for RNA-binding. An ATP-binding site is contributed by Tyr-1682–Thr-1689. The DEAH box signature appears at Asp-1773–His-1776. Positions Glu-1820–Tyr-1997 constitute a Helicase C-terminal domain. Position 1877 is an N6-acetyllysine; by host (Lys-1877). A helical transmembrane segment spans residues Met-2158–Phe-2178. Residues Met-2179–Arg-2186 are Lumenal-facing. Residues Met-2187 to Lys-2207 constitute an intramembrane region (helical). Residues Pro-2208–Thr-2209 lie on the Lumenal side of the membrane. The chain crosses the membrane as a helical span at residues His-2210–Gly-2230. At Gln-2231–Ala-2241 the chain is on the cytoplasmic side. A helical transmembrane segment spans residues Tyr-2242–Leu-2262. Residues Glu-2263–Gly-2293 are Lumenal-facing. The segment at residues Ala-2294–Ile-2314 is an intramembrane region (helical). Residues Lys-2315–Ile-2360 lie on the Lumenal side of the membrane. The chain crosses the membrane as a helical span at residues Thr-2361 to Leu-2380. Residues Pro-2381–Ala-2421 are Cytoplasmic-facing. The helical transmembrane segment at Leu-2422–Met-2442 threads the bilayer. Over Cys-2443–Thr-2445 the chain is Lumenal. Residues Pro-2446–Gly-2466 form a helical membrane-spanning segment. Residues Asn-2467–Ile-3411 lie on the Cytoplasmic side of the membrane. The region spanning Gly-2507–Ser-2771 is the mRNA cap 0-1 NS5-type MT domain. Ser-2562 is a binding site for S-adenosyl-L-methionine. Ser-2562 carries the phosphoserine modification. The active-site For 2'-O-MTase activity is the Lys-2567. Residues Gly-2592, Trp-2593, Thr-2610, Leu-2611, Asp-2637, and Ile-2638 each coordinate S-adenosyl-L-methionine. Residue Asp-2652 is the For 2'-O-MTase activity of the active site. Ile-2653 contributes to the S-adenosyl-L-methionine binding site. Residues Lys-2688 and Glu-2724 each act as for 2'-O-MTase activity in the active site. Tyr-2726 contacts S-adenosyl-L-methionine. Positions Arg-2878–Arg-2911 match the Nuclear localization signal motif. The Zn(2+) site is built by Glu-2945, His-2949, Cys-2954, and Cys-2957. A RdRp catalytic domain is found at Gly-3035–Ala-3187. Positions 3222, 3238, and 3357 each coordinate Zn(2+).

In the N-terminal section; belongs to the class I-like SAM-binding methyltransferase superfamily. mRNA cap 0-1 NS5-type methyltransferase family. In terms of assembly, homodimer. Interacts (via N-terminus) with host EXOC1 (via C-terminus); this interaction results in EXOC1 degradation through the proteasome degradation pathway. As to quaternary structure, forms heterodimers with envelope protein E in the endoplasmic reticulum and Golgi. Homodimer; in the endoplasmic reticulum and Golgi. Interacts with protein prM. Interacts with non-structural protein 1. In terms of assembly, homodimer; Homohexamer when secreted. Interacts with envelope protein E. As to quaternary structure, interacts (via N-terminus) with serine protease NS3. Forms a heterodimer with serine protease NS3. May form homooligomers. In terms of assembly, forms a heterodimer with NS2B. Interacts with non-structural protein 2A (via N-terminus). Interacts with NS4B. Interacts with unphosphorylated RNA-directed RNA polymerase NS5; this interaction stimulates RNA-directed RNA polymerase NS5 guanylyltransferase activity. NS3 interacts with host PDCD6IP; this interaction contributes to virion release. As to quaternary structure, interacts with serine protease NS3. Homodimer. Interacts with host STAT2; this interaction prevents the establishment of cellular antiviral state. Interacts with serine protease NS3. Interacts with host TRIM23; this interaction leads to NS5 ubiquitination. In terms of processing, specific enzymatic cleavages in vivo yield mature proteins. The nascent capsid protein C contains a C-terminal hydrophobic domain that act as a signal sequence for translocation of prM into the lumen of the ER. Mature capsid protein C is cleaved at a site upstream of this hydrophobic domain by NS3. prM is cleaved in post-Golgi vesicles by a host furin, releasing the mature small envelope protein M, and peptide pr. Non-structural protein 2A-alpha, a C-terminally truncated form of non-structural protein 2A, results from partial cleavage by NS3. Specific enzymatic cleavages in vivo yield mature proteins peptide 2K acts as a signal sequence and is removed from the N-terminus of NS4B by the host signal peptidase in the ER lumen. Signal cleavage at the 2K-4B site requires a prior NS3 protease-mediated cleavage at the 4A-2K site. Post-translationally, cleaved in post-Golgi vesicles by a host furin, releasing the mature small envelope protein M, and peptide pr. This cleavage is incomplete as up to 30% of viral particles still carry uncleaved prM. N-glycosylated. In terms of processing, N-glycosylated. The excreted form is glycosylated and this is required for efficient secretion of the protein from infected cells. Post-translationally, polyubiquitinated; ubiquitination is probably mediated by host TRIM23 and is prerequisite for NS5-STAT2 interaction. NS5 is not ISGylated or sumoylated. Acetylated by host KAT5. Acetylation modulates NS3 RNA-binding and unwinding activities and plays an important positive role for viral replication. In terms of processing, phosphorylated on serines residues. This phosphorylation may trigger NS5 nuclear localization.

It localises to the virion. It is found in the host nucleus. The protein resides in the host cytoplasm. The protein localises to the host perinuclear region. Its subcellular location is the secreted. It localises to the virion membrane. It is found in the host endoplasmic reticulum membrane. The catalysed reaction is Selective hydrolysis of -Xaa-Xaa-|-Yaa- bonds in which each of the Xaa can be either Arg or Lys and Yaa can be either Ser or Ala.. It catalyses the reaction RNA(n) + a ribonucleoside 5'-triphosphate = RNA(n+1) + diphosphate. The enzyme catalyses a ribonucleoside 5'-triphosphate + H2O = a ribonucleoside 5'-diphosphate + phosphate + H(+). It carries out the reaction ATP + H2O = ADP + phosphate + H(+). The catalysed reaction is a 5'-end (5'-triphosphoguanosine)-ribonucleoside in mRNA + S-adenosyl-L-methionine = a 5'-end (N(7)-methyl 5'-triphosphoguanosine)-ribonucleoside in mRNA + S-adenosyl-L-homocysteine. It catalyses the reaction a 5'-end (N(7)-methyl 5'-triphosphoguanosine)-ribonucleoside in mRNA + S-adenosyl-L-methionine = a 5'-end (N(7)-methyl 5'-triphosphoguanosine)-(2'-O-methyl-ribonucleoside) in mRNA + S-adenosyl-L-homocysteine + H(+). In terms of biological role, plays a role in virus budding by binding to the cell membrane and gathering the viral RNA into a nucleocapsid that forms the core of a mature virus particle. During virus entry, may induce genome penetration into the host cytoplasm after hemifusion induced by the surface proteins. Can migrate to the cell nucleus where it modulates host functions. Inhibits RNA silencing by interfering with host Dicer. Its function is as follows. Prevents premature fusion activity of envelope proteins in trans-Golgi by binding to envelope protein E at pH6.0. After virion release in extracellular space, gets dissociated from E dimers. Functionally, acts as a chaperone for envelope protein E during intracellular virion assembly by masking and inactivating envelope protein E fusion peptide. prM is the only viral peptide matured by host furin in the trans-Golgi network probably to avoid catastrophic activation of the viral fusion activity in acidic Golgi compartment prior to virion release. prM-E cleavage is inefficient, and many virions are only partially matured. These uncleaved prM would play a role in immune evasion. In terms of biological role, may play a role in virus budding. Exerts cytotoxic effects by activating a mitochondrial apoptotic pathway through M ectodomain. May display a viroporin activity. Binds to host cell surface receptor and mediates fusion between viral and cellular membranes. Envelope protein is synthesized in the endoplasmic reticulum in the form of heterodimer with protein prM. They play a role in virion budding in the ER, and the newly formed immature particle is covered with 60 spikes composed of heterodimer between precursor prM and envelope protein E. The virion is transported to the Golgi apparatus where the low pH causes dissociation of PrM-E heterodimers and formation of E homodimers. prM-E cleavage is inefficient, and many virions are only partially matured. These uncleaved prM would play a role in immune evasion. Its function is as follows. Involved in immune evasion, pathogenesis and viral replication. Once cleaved off the polyprotein, is targeted to three destinations: the viral replication cycle, the plasma membrane and the extracellular compartment. Essential for viral replication. Required for formation of the replication complex and recruitment of other non-structural proteins to the ER-derived membrane structures. Excreted as a hexameric lipoparticle that plays a role against host immune response. Antagonizing the complement function. Binds to the host macrophages and dendritic cells. Inhibits signal transduction originating from Toll-like receptor 3 (TLR3). Functionally, component of the viral RNA replication complex that functions in virion assembly and antagonizes the host immune response. In terms of biological role, required cofactor for the serine protease function of NS3. May have membrane-destabilizing activity and form viroporins. Displays three enzymatic activities: serine protease, NTPase and RNA helicase. NS3 serine protease, in association with NS2B, performs its autocleavage and cleaves the polyprotein at dibasic sites in the cytoplasm: C-prM, NS2A-NS2B, NS2B-NS3, NS3-NS4A, NS4A-2K and NS4B-NS5. NS3 RNA helicase binds RNA and unwinds dsRNA in the 3' to 5' direction. Also plays a role in virus assembly. Its function is as follows. Regulates the ATPase activity of the NS3 helicase activity. NS4A allows NS3 helicase to conserve energy during unwinding. Functionally, functions as a signal peptide for NS4B and is required for the interferon antagonism activity of the latter. In terms of biological role, induces the formation of ER-derived membrane vesicles where the viral replication takes place. Inhibits interferon (IFN)-induced host STAT1 phosphorylation and nuclear translocation, thereby preventing the establishment of cellular antiviral state by blocking the IFN-alpha/beta pathway. Replicates the viral (+) and (-) RNA genome, and performs the capping of genomes in the cytoplasm. NS5 methylates viral RNA cap at guanine N-7 and ribose 2'-O positions. Besides its role in RNA genome replication, also prevents the establishment of cellular antiviral state by blocking the interferon-alpha/beta (IFN-alpha/beta) signaling pathway. IFN-I induces binding of NS5 to host IFN-activated transcription factor STAT2, preventing its transcriptional activity. Host TRIM23 is the E3 ligase that interacts with and polyubiquitinates NS5 to promote its binding to STAT2 and trigger IFN-I signaling inhibition. This Yellow fever virus (isolate Ivory Coast/85-82H/1982) (YFV) protein is Genome polyprotein.